Reading from the N-terminus, the 353-residue chain is Methionine import ATP-binding protein MetN (353 aa).

Residues 7–249 (LENIDVTFKQ…PKEELSRQFV (243 aa)) form the ABC transporter domain. 41-48 (GYSGAGKS) is an ATP binding site.

It belongs to the ABC transporter superfamily. Methionine importer (TC 3.A.1.24) family. The complex is composed of two ATP-binding proteins (MetN), two transmembrane proteins (MetI) and a solute-binding protein (MetQ).

Its subcellular location is the cell membrane. The catalysed reaction is L-methionine(out) + ATP + H2O = L-methionine(in) + ADP + phosphate + H(+). The enzyme catalyses D-methionine(out) + ATP + H2O = D-methionine(in) + ADP + phosphate + H(+). Functionally, part of the ABC transporter complex MetNIQ involved in methionine import. Responsible for energy coupling to the transport system. This Ligilactobacillus salivarius (strain UCC118) (Lactobacillus salivarius) protein is Methionine import ATP-binding protein MetN.